A 131-amino-acid polypeptide reads, in one-letter code: Glycine cleavage system H protein (131 aa).

Residues 24 to 106 (TLRVGITDYA…YGEGWLVDLQ (83 aa)) form the Lipoyl-binding domain. Position 65 is an N6-lipoyllysine (Lys-65).

This sequence belongs to the GcvH family. The glycine cleavage system is composed of four proteins: P, T, L and H. It depends on (R)-lipoate as a cofactor.

Its function is as follows. The glycine cleavage system catalyzes the degradation of glycine. The H protein shuttles the methylamine group of glycine from the P protein to the T protein. The sequence is that of Glycine cleavage system H protein from Mycobacterium sp. (strain JLS).